Here is a 398-residue protein sequence, read N- to C-terminus: MAAFKTLDDIGNISGKRVLVRVDLNVPVADGKVTDATRIERIAPTIAELSGKGAKVILLAHFGRPKDGPSPEFSLEPIARATAEVLGRPVGFASDCVGDMAGSAVAAMNKGDVLLFENTRFYKAEEKNDPAFSERLAANGDIFVNDAFSAAHRAHSSTEGLARLLPSFAGRTMQAELEALEKGLGNPVRPVVAIVGGAKVSTKIDLLMNLVKKVDALVIGGGMANTFLAARGTDVGKSLCEHDLAPTAKQIMIEAAEAGCAIILPVDGVVAKEFKAGAACETVAISDVPADGMILDVGEKTVKTIGEWIDRAATLVWNGPLGAFEIEPFDHATVAAAKHAAARTKAGKLVSVAGGGDTVAALNHAGVADDFTYVSTAGGAFLEWMEGKPLPGVDVLKR.

Residues 23–25, Arg-38, 61–64, Arg-120, and Arg-153 contribute to the substrate site; these read DLN and HFGR. Residues Lys-203, Glu-325, and 355-358 each bind ATP; that span reads GGDT.

Belongs to the phosphoglycerate kinase family. Monomer.

It is found in the cytoplasm. It carries out the reaction (2R)-3-phosphoglycerate + ATP = (2R)-3-phospho-glyceroyl phosphate + ADP. It participates in carbohydrate degradation; glycolysis; pyruvate from D-glyceraldehyde 3-phosphate: step 2/5. The chain is Phosphoglycerate kinase from Mesorhizobium japonicum (strain LMG 29417 / CECT 9101 / MAFF 303099) (Mesorhizobium loti (strain MAFF 303099)).